Reading from the N-terminus, the 372-residue chain is MNNEETFYQAMRRQGVTRRSFLKYCSLAATSLGLGAGMAPKIAWALENKPRIPVVWIHGLECTCCTESFIRSAHPLAKDVILSLISLDYDDTLMAAAGTQAEEVFEDIITQYNGKYILAVEGNPPLGEQGMFCISSGRPFIEKLKRAAAGASAIIAWGTCASWGCVQAARPNPTQATPIDKVITDKPIIKVPGCPPIPDVMSAIITYMVTFDRLPDVDRMGRPLMFYGQRIHDKCYRRAHFDAGEFVQSWDDDAARKGYCLYKMGCKGPTTYNACSSTRWNDGVSFPIQSGHGCLGCAENGFWDRGSFYSRVVDIPQMGTHSTADTVGLTALGVVAAAVGVHAVASSVDQRRRHNQQPTETEHQPGNEDKQA.

Positions 1–45 form a signal peptide, tat-type signal; it reads MNNEETFYQAMRRQGVTRRSFLKYCSLAATSLGLGAGMAPKIAWA. Over 46–325 the chain is Periplasmic; that stretch reads LENKPRIPVV…PQMGTHSTAD (280 aa). Positions 62, 65, 160, 194, 232, 235, 260, and 266 each coordinate [4Fe-4S] cluster. [3Fe-4S] cluster is bound by residues C275, C294, and C297. Residues 326–346 traverse the membrane as a helical segment; the sequence is TVGLTALGVVAAAVGVHAVAS. Positions 346 to 372 are disordered; the sequence is SSVDQRRRHNQQPTETEHQPGNEDKQA. Residues 347–372 lie on the Cytoplasmic side of the membrane; sequence SVDQRRRHNQQPTETEHQPGNEDKQA. Basic and acidic residues predominate over residues 360 to 372; the sequence is ETEHQPGNEDKQA.

It belongs to the [NiFe]/[NiFeSe] hydrogenase small subunit family. In terms of assembly, heterodimer of a large and a small subunit. [4Fe-4S] cluster is required as a cofactor. The cofactor is [3Fe-4S] cluster. In terms of processing, predicted to be exported by the Tat system. The position of the signal peptide cleavage has not been experimentally proven.

The protein localises to the cell inner membrane. The catalysed reaction is H2 + A = AH2. This is one of three S.flexneri hydrogenases synthesized in response to different physiological conditions. HYD1 is believed to have a role in hydrogen cycling during fermentative growth. In Shigella flexneri, this protein is Hydrogenase-1 small chain (hyaA).